The chain runs to 213 residues: NADH dehydrogenase [ubiquinone] iron-sulfur protein 7, mitochondrial (213 aa).

A mitochondrion-targeting transit peptide spans 1 to 37 (MAVLSAPGLRGFRILGLRSSVGPAVQARSVHQSVATD). Residues 30–44 (VHQSVATDGPSSTQP) show a composition bias toward polar residues. Positions 30–53 (VHQSVATDGPSSTQPALPKARAVA) are disordered. Cys-88 and Cys-89 together coordinate [4Fe-4S] cluster. Arg-111 carries the hydroxyarginine modification. Positions 153 and 183 each coordinate [4Fe-4S] cluster.

Belongs to the complex I 20 kDa subunit family. Core subunit of respiratory chain NADH dehydrogenase (Complex I) which is composed of 45 different subunits. This is a component of the iron-sulfur (IP) fragment of the enzyme. The cofactor is [4Fe-4S] cluster. In terms of processing, hydroxylated ar Arg-111 by NDUFAF5 early in the pathway of assembly of complex I, before the formation of the juncture between peripheral and membrane arms.

It localises to the mitochondrion inner membrane. It carries out the reaction a ubiquinone + NADH + 5 H(+)(in) = a ubiquinol + NAD(+) + 4 H(+)(out). Functionally, core subunit of the mitochondrial membrane respiratory chain NADH dehydrogenase (Complex I) which catalyzes electron transfer from NADH through the respiratory chain, using ubiquinone as an electron acceptor. Essential for the catalytic activity of complex I. This Pan troglodytes (Chimpanzee) protein is NADH dehydrogenase [ubiquinone] iron-sulfur protein 7, mitochondrial (NDUFS7).